A 480-amino-acid polypeptide reads, in one-letter code: RuvB-like helicase 2 (480 aa).

73–80 (GEPSTGKT) contributes to the ATP binding site.

It belongs to the RuvB family. In terms of assembly, forms homohexameric rings. May form a dodecamer with rept made of two stacked hexameric rings. Component of the chromatin remodeling Ino80 complex.

The protein localises to the nucleus. The enzyme catalyses ATP + H2O = ADP + phosphate + H(+). Functionally, acts as a transcriptional coactivator in Wg signaling caused by altered arm signaling. Pont and rept interfere antagonistically with nuclear arm signaling function, and are required to enhance or reduce arm activity, respectively. Also an essential cofactor for the normal function of Myc; required for cellular proliferation and growth. In terms of biological role, proposed core component of the chromatin remodeling Ino80 complex which is involved in transcriptional regulation, DNA replication and probably DNA repair. The sequence is that of RuvB-like helicase 2 from Drosophila pseudoobscura pseudoobscura (Fruit fly).